A 259-amino-acid polypeptide reads, in one-letter code: Insulin-induced gene 1 protein (259 aa).

Residues 1 to 66 (MPRLHDHVWS…ARPGSWHHDL (66 aa)) lie on the Cytoplasmic side of the membrane. Residues 33-57 (PQGPGAPEPEPAPRGQREGTAGFSA) are disordered. The helical transmembrane segment at 67 to 89 (VQRSLVLFSFGVVLALVLNLLQI) threads the bilayer. Over 90-108 (QRNVTLFPDEVIATIFSSA) the chain is Extracellular. A helical transmembrane segment spans residues 109–126 (WWVPPCCGTAAAVVGLLY). Residues 127–141 (PCIDSHLGEPHKFKR) lie on the Cytoplasmic side of the membrane. Glycyl lysine isopeptide (Lys-Gly) (interchain with G-Cter in ubiquitin) cross-links involve residues lysine 138 and lysine 140. The chain crosses the membrane as a helical span at residues 142–164 (EWASVMRCIAVFVGINHASAKLD). The Extracellular segment spans residues 165-167 (FAN). Residues 168–186 (NVQLSLTLAALSLGLWWTF) traverse the membrane as a helical segment. Residues 187-191 (DRSRS) lie on the Cytoplasmic side of the membrane. Serine 189 carries the phosphoserine modification. The helical transmembrane segment at 192–213 (GLGLGITIAFLATLITQFLVYN) threads the bilayer. Residues 214 to 227 (GVYQYTSPDFLYIR) lie on the Extracellular side of the membrane. A helical membrane pass occupies residues 228–245 (SWLPCIFFSGGVTVGNIG). Over 246–259 (RQLAMGVPEKPHSD) the chain is Cytoplasmic. Positions 253-259 (PEKPHSD) match the KxHxx motif.

It belongs to the INSIG family. Interacts with SCAP; interaction is direct and only takes place in the presence of sterols; it prevents interaction between SCAP and the coat protein complex II (COPII). Associates with the SCAP-SREBP complex (composed of SCAP and SREBF1/SREBP1 or SREBF2/SREBP2); association is mediated via its interaction with SCAP and only takes place in the presence of sterols. Interaction with SCAP is mutually exclusive with PAQR3. Interacts with HMGCR (via its SSD); the interaction, accelerated by sterols, leads to the recruitment of HMGCR to AMFR/gp78 for its ubiquitination by the sterol-mediated ERAD pathway. Interacts with AMFR/gp78 (via its membrane domain); the interaction recruits HMCR at the ER membrane for its ubiquitination and degradation by the sterol-mediated ERAD pathway. Interacts with SOAT2/ACAT2; leading to promote recruitment of AMFR/gp78 and subsequent ubiquitination of SOAT2/ACAT2. Interacts with RNF139. Interacts with RNF145. Phosphorylation at Ser-189 by PCK1 reduces binding to oxysterol, disrupting the interaction between INSIG1 and SCAP, thereby promoting nuclear translocation of SREBP proteins (SREBF1/SREBP1 or SREBF2/SREBP2) and subsequent transcription of downstream lipogenesis-related genes. In terms of processing, ubiquitinated by AMFR/gp78 in response to sterol deprivation, leading to its degradation: when the SCAP-SREBP complex becomes dissociated from INSIG1, INSIG1 is then ubiquitinated and degraded in proteasomes. Although ubiquitination is required for rapid INSIG1 degradation, it is not required for release of the SCAP-SREBP complex. Ubiquitinated by RNF139. As to expression, highly expressed in liver and kidney.

It is found in the endoplasmic reticulum membrane. In terms of biological role, oxysterol-binding protein that mediates feedback control of cholesterol synthesis by controlling both endoplasmic reticulum to Golgi transport of SCAP and degradation of HMGCR. Acts as a negative regulator of cholesterol biosynthesis by mediating the retention of the SCAP-SREBP complex in the endoplasmic reticulum, thereby blocking the processing of sterol regulatory element-binding proteins (SREBPs) SREBF1/SREBP1 and SREBF2/SREBP2. Binds oxysterol, including 25-hydroxycholesterol, regulating interaction with SCAP and retention of the SCAP-SREBP complex in the endoplasmic reticulum. In presence of oxysterol, interacts with SCAP, retaining the SCAP-SREBP complex in the endoplasmic reticulum, thereby preventing SCAP from escorting SREBF1/SREBP1 and SREBF2/SREBP2 to the Golgi. Sterol deprivation or phosphorylation by PCK1 reduce oxysterol-binding, disrupting the interaction between INSIG1 and SCAP, thereby promoting Golgi transport of the SCAP-SREBP complex, followed by processing and nuclear translocation of SREBF1/SREBP1 and SREBF2/SREBP2. Also regulates cholesterol synthesis by regulating degradation of HMGCR: initiates the sterol-mediated ubiquitin-mediated endoplasmic reticulum-associated degradation (ERAD) of HMGCR via recruitment of the reductase to the ubiquitin ligases AMFR/gp78 and/or RNF139. Also regulates degradation of SOAT2/ACAT2 when the lipid levels are low: initiates the ubiquitin-mediated degradation of SOAT2/ACAT2 via recruitment of the ubiquitin ligases AMFR/gp78. The polypeptide is Insulin-induced gene 1 protein (Rattus norvegicus (Rat)).